A 288-amino-acid polypeptide reads, in one-letter code: MRIRVPATTANLGPGFDSCGLALTLYLTLDIGAEADSWYIEHNIGGGIPHDETNVIIETALNLAPNLTPHHLVMTCDIPPARGLGSSSAAVVAGIELANTLAELNLSKEEKVRIAAEIEGHPDNVAPAVLGNWVVGAKLDGEDFYVRHLFPDCALIAFIPKAELLTSESRGVLPDTLPFKEAVQASSIANVMIAAILRNDMTLAGEMMERDLWHEKYRSQLVPHLAQIRDVAKNQGAYAACLSGAGPTVLVFAPRNLANKLQTSLQTLEIDADVLLLDVEGSGAEVFR.

Residue Pro-79–Ala-89 participates in ATP binding.

The protein belongs to the GHMP kinase family. Homoserine kinase subfamily.

The protein resides in the cytoplasm. The enzyme catalyses L-homoserine + ATP = O-phospho-L-homoserine + ADP + H(+). It functions in the pathway amino-acid biosynthesis; L-threonine biosynthesis; L-threonine from L-aspartate: step 4/5. Catalyzes the ATP-dependent phosphorylation of L-homoserine to L-homoserine phosphate. The sequence is that of Homoserine kinase from Listeria monocytogenes serovar 1/2a (strain ATCC BAA-679 / EGD-e).